Consider the following 214-residue polypeptide: Charged multivesicular body protein 2b (214 aa).

Residues 25–55 (QRTITRDRAALEKQERQLELEIKKMAKTGNK) are a coiled coil. Positions 179–201 (AKAPSAARGLPSASTSKASTISD) are disordered. Residues 190 to 199 (SASTSKASTI) show a composition bias toward polar residues. The short motif at 202–212 (EEIERQLKALG) is the MIT-interacting motif element.

The protein belongs to the SNF7 family. In terms of assembly, probable core component of the endosomal sorting required for transport complex III (ESCRT-III). ESCRT-III components are thought to multimerize to form a flat lattice on the perimeter membrane of the endosome.

The protein resides in the cytoplasm. It is found in the cytosol. Its subcellular location is the late endosome membrane. Its function is as follows. Probable core component of the endosomal sorting required for transport complex III (ESCRT-III) which is involved in multivesicular bodies (MVBs) formation and sorting of endosomal cargo proteins into MVBs. MVBs contain intraluminal vesicles (ILVs) that are generated by invagination and scission from the limiting membrane of the endosome and mostly are delivered to lysosomes enabling degradation of membrane proteins, such as stimulated growth factor receptors, lysosomal enzymes and lipids. This is Charged multivesicular body protein 2b (CHMP2B) from Gallus gallus (Chicken).